We begin with the raw amino-acid sequence, 156 residues long: Small ribosomal subunit protein uS7 (156 aa).

This sequence belongs to the universal ribosomal protein uS7 family. Part of the 30S ribosomal subunit. Contacts proteins S9 and S11.

Functionally, one of the primary rRNA binding proteins, it binds directly to 16S rRNA where it nucleates assembly of the head domain of the 30S subunit. Is located at the subunit interface close to the decoding center, probably blocks exit of the E-site tRNA. In Carsonella ruddii (strain PV), this protein is Small ribosomal subunit protein uS7.